The following is a 380-amino-acid chain: Chromo domain-containing protein 2 (380 aa).

Disordered stretches follow at residues 14 to 58 (ISES…SLYG) and 100 to 156 (KLSP…VPLN). The span at 33 to 52 (NSINNKSSTASLESPQNGSW) shows a compositional bias: polar residues. Residues 108–119 (EDSEDKKEEDES) are compositionally biased toward acidic residues. Over residues 121–140 (SYKNEFKSSSSASVSSNFEK) the composition is skewed to low complexity. In terms of domain architecture, Chromo spans 176–238 (FAVEMILDSR…SRGGKPDLSS (63 aa)). Positions 250–273 (SNEASYVEKDESSNSDDSISYKRR) are disordered.

Its subcellular location is the nucleus. In terms of biological role, component of the kinetochore which plays a role in stabilizing microtubules and so allowing accurate chromosome segregation. This is Chromo domain-containing protein 2 (chp2) from Schizosaccharomyces pombe (strain 972 / ATCC 24843) (Fission yeast).